A 433-amino-acid polypeptide reads, in one-letter code: Meiotically up-regulated gene 131 protein (433 aa).

Positions 401–412 are enriched in polar residues; sequence LSSQGREISNTL. Residues 401–433 are disordered; sequence LSSQGREISNTLSRKRGAKGSNPFEIENMMPHA.

It belongs to the UPF0300 family.

The protein localises to the golgi apparatus. Has a role in meiosis. The sequence is that of Meiotically up-regulated gene 131 protein (mug131) from Schizosaccharomyces pombe (strain 972 / ATCC 24843) (Fission yeast).